Here is a 162-residue protein sequence, read N- to C-terminus: uncharacterized protein (162 aa).

The N-terminal stretch at 1-34 (MRKKNNIKKWLLIIAGFLIICIITLFVMVSGNKV) is a signal peptide.

This is an uncharacterized protein from Bacillus subtilis (strain 168).